We begin with the raw amino-acid sequence, 729 residues long: Neurochondrin (729 aa).

S2 bears the N-acetylserine mark. A Phosphoserine modification is found at S2. Residues C3 and C4 are each lipidated (S-palmitoyl cysteine). R75 bears the Asymmetric dimethylarginine mark. S448 is subject to Phosphoserine.

This sequence belongs to the neurochondrin family. As to quaternary structure, interacts with MCHR1. Interacts with SEMA4C. Interacts with DIAPH1 (via FH3 domain). Interacts with GRM5. Post-translationally, palmitoylated. Palmitoylation by ZDHHC1, ZDHHC3 and ZDHHC11 regulates the association of NCDN with endosome membranes. May also be palmitoylated by ZDHHC7. As to expression, expressed in brain and in peripheral nervous system (at protein level). Weakly expressed in neurites.

It is found in the cytoplasm. Its subcellular location is the cytosol. The protein resides in the endosome membrane. It localises to the cell projection. The protein localises to the dendrite. It is found in the postsynapse. Functionally, probably involved in signal transduction, in the nervous system, via increasing cell surface localization of GRM5 and positively regulating its signaling. Required for the spatial learning process. Acts as a negative regulator of Ca(2+)-calmodulin-dependent protein kinase 2 (CaMK2) phosphorylation. May play a role in modulating melanin-concentrating hormone-mediated functions via its interaction with MCHR1 that interferes with G protein-coupled signal transduction. May be involved in bone metabolism. May also be involved in neurite outgrowth. The polypeptide is Neurochondrin (Ncdn) (Rattus norvegicus (Rat)).